Here is an 816-residue protein sequence, read N- to C-terminus: Phosphatidylinositol 4-kinase beta (816 aa).

Disordered stretches follow at residues 1 to 30 (MGDT…GSLL), 99 to 120 (EEED…RRRR), and 248 to 318 (AHRK…SFSS). The residue at position 2 (Gly2) is an N-acetylglycine. Positions 2–68 (GDTVVEPAPL…VKLLHGGVAV (67 aa)) are interaction with ACBD3. The PIK helical domain maps to 52 to 242 (CQDVLEKVKL…GTKLRKLILS (191 aa)). Ser258 carries the post-translational modification Phosphoserine. Phosphothreonine is present on Thr263. Ser266, Ser275, Ser277, Ser284, and Ser294 each carry phosphoserine. Polar residues-rich tracts occupy residues 278–297 (DATA…SNPK) and 306–318 (SSST…SFSS). Ser428 carries the post-translational modification Phosphoserine. Residue Thr438 is modified to Phosphothreonine. Ser511 carries the phosphoserine modification. Phosphothreonine occurs at positions 517 and 519. In terms of domain architecture, PI3K/PI4K catalytic spans 535-801 (EPWQEKVRRI…MVDGSMRSIT (267 aa)). The segment at 541–547 (VRRIREG) is G-loop. Residues 668–676 (QVKDRHNGN) are catalytic loop. Positions 687 to 711 (HIDFGFILSSSPRNLGFETSAFKLT) are activation loop.

The protein belongs to the PI3/PI4-kinase family. Type III PI4K subfamily. As to quaternary structure, interacts with ARF1 and ARF3 in the Golgi complex, but not with ARF4, ARF5 or ARF6. Interacts with NCS1/FREQ in a calcium-independent manner. Interacts with CALN1/CABP8 and CALN2/CABP7; in a calcium-dependent manner; this interaction competes with NCS1/FREQ binding. Interacts with ACBD3. Interacts with ARMH3, YWHAB, YWHAE, YWHAG, YWHAH, YWHAQ, YWHAZ and SFN. Interacts with GGA2 (via VHS domain); the interaction is important for PI4KB location at the Golgi apparatus membrane. Interacts with ATG9A. The cofactor is Mg(2+). Mn(2+) is required as a cofactor.

It localises to the endomembrane system. The protein localises to the mitochondrion outer membrane. The protein resides in the rough endoplasmic reticulum membrane. It is found in the golgi apparatus. Its subcellular location is the golgi apparatus membrane. The enzyme catalyses a 1,2-diacyl-sn-glycero-3-phospho-(1D-myo-inositol) + ATP = a 1,2-diacyl-sn-glycero-3-phospho-(1D-myo-inositol 4-phosphate) + ADP + H(+). Inhibited by wortmannin. Increased kinase activity upon interaction with NCS1/FREQ. Functionally, phosphorylates phosphatidylinositol (PI) in the first committed step in the production of the second messenger inositol-1,4,5,-trisphosphate (PIP). May regulate Golgi disintegration/reorganization during mitosis, possibly via its phosphorylation. Involved in Golgi-to-plasma membrane trafficking. The chain is Phosphatidylinositol 4-kinase beta (PI4KB) from Callithrix jacchus (White-tufted-ear marmoset).